Consider the following 356-residue polypeptide: Protein RecA (356 aa).

An ATP-binding site is contributed by 67–74 (GPESSGKT).

This sequence belongs to the RecA family.

The protein resides in the cytoplasm. Can catalyze the hydrolysis of ATP in the presence of single-stranded DNA, the ATP-dependent uptake of single-stranded DNA by duplex DNA, and the ATP-dependent hybridization of homologous single-stranded DNAs. It interacts with LexA causing its activation and leading to its autocatalytic cleavage. The sequence is that of Protein RecA from Yersinia pseudotuberculosis serotype I (strain IP32953).